The following is a 599-amino-acid chain: rRNA (cytosine-C(5))-methyltransferase NOP2C (599 aa).

A PUA domain is found at 158-265 (PKEVLVSRKC…IAVDLNHRVF (108 aa)). Residues 304–310 (CAAPGGK), Asp328, and Asp355 contribute to the S-adenosyl-L-methionine site. The tract at residues 372-454 (LINGDNSSSM…GGRAGKSQGF (83 aa)) is disordered. The segment covering 378–388 (SSSMTSHSELS) has biased composition (low complexity). Positions 399–412 (RRSEADKSCEKNDS) are enriched in basic and acidic residues. Over residues 413–424 (TEQPNGGDNVSQ) the composition is skewed to polar residues. Residues 428–438 (RKNKGRLKNGR) show a composition bias toward basic residues. Asp465 contacts S-adenosyl-L-methionine. Cys516 serves as the catalytic Nucleophile.

It belongs to the class I-like SAM-binding methyltransferase superfamily. RsmB/NOP family.

The protein resides in the nucleus. Its subcellular location is the nucleolus. It carries out the reaction a cytidine in rRNA + S-adenosyl-L-methionine = a 5-methylcytidine in rRNA + S-adenosyl-L-homocysteine + H(+). Functionally, involved in ribosomal large subunit assembly. S-adenosyl-L-methionine-dependent methyltransferase that may methylates the C(5) position of cytosine in rRNA. May play a role in the regulation of the cell cycle and the increased nucleolar activity that is associated with the cell proliferation. Seems involved in the regulation of cell proliferation. This Arabidopsis thaliana (Mouse-ear cress) protein is rRNA (cytosine-C(5))-methyltransferase NOP2C.